The sequence spans 217 residues: Non-structural protein NS3 (217 aa).

The protein belongs to the orbivirus NS3 family.

May play a role in the release of virions from infected cells. This Camelus dromedarius (Dromedary) protein is Non-structural protein NS3 (Segment-10).